The sequence spans 356 residues: Peptide chain release factor 1 (356 aa).

Q233 is subject to N5-methylglutamine.

Belongs to the prokaryotic/mitochondrial release factor family. Methylated by PrmC. Methylation increases the termination efficiency of RF1.

The protein localises to the cytoplasm. In terms of biological role, peptide chain release factor 1 directs the termination of translation in response to the peptide chain termination codons UAG and UAA. The sequence is that of Peptide chain release factor 1 (prfA) from Bacillus subtilis (strain 168).